The sequence spans 412 residues: Putative competence-damage inducible protein (412 aa).

The protein belongs to the CinA family.

The protein is Putative competence-damage inducible protein of Bacillus cereus (strain ATCC 14579 / DSM 31 / CCUG 7414 / JCM 2152 / NBRC 15305 / NCIMB 9373 / NCTC 2599 / NRRL B-3711).